A 101-amino-acid polypeptide reads, in one-letter code: Phosphoribosyl-AMP cyclohydrolase (101 aa).

Asp-71 contacts Mg(2+). Cys-72 serves as a coordination point for Zn(2+). Mg(2+)-binding residues include Asp-73 and Asp-75. Residues Cys-88 and Cys-95 each coordinate Zn(2+).

It belongs to the PRA-CH family. As to quaternary structure, homodimer. The cofactor is Mg(2+). Requires Zn(2+) as cofactor.

Its subcellular location is the cytoplasm. It carries out the reaction 1-(5-phospho-beta-D-ribosyl)-5'-AMP + H2O = 1-(5-phospho-beta-D-ribosyl)-5-[(5-phospho-beta-D-ribosylamino)methylideneamino]imidazole-4-carboxamide. Its pathway is amino-acid biosynthesis; L-histidine biosynthesis; L-histidine from 5-phospho-alpha-D-ribose 1-diphosphate: step 3/9. Functionally, catalyzes the hydrolysis of the adenine ring of phosphoribosyl-AMP. In Bacillus cereus (strain AH820), this protein is Phosphoribosyl-AMP cyclohydrolase.